The primary structure comprises 189 residues: Parkinson disease protein 7 homolog (189 aa).

S-palmitoyl cysteine attachment occurs at residues cysteine 46 and cysteine 53. Tyrosine 67 bears the Phosphotyrosine mark. Cysteine 106 is lipidated: S-palmitoyl cysteine. Residue cysteine 106 is the Nucleophile of the active site. Cysteine 106 carries the post-translational modification Cysteine sulfinic acid (-SO2H). Cysteine 106 carries the post-translational modification Cysteine sulfinic acid (-SO2H); alternate. Residue cysteine 106 is the site of S-palmitoyl cysteine; alternate attachment. Histidine 126 is a catalytic residue. Lysine 130 is covalently cross-linked (Glycyl lysine isopeptide (Lys-Gly) (interchain with G-Cter in SUMO)). Lysine 148 carries the post-translational modification N6-acetyllysine. Lysine 182 bears the N6-succinyllysine mark.

It belongs to the peptidase C56 family. Homodimer. It depends on Deglycase activity does not require glutathione as a cofactor, however, glycated glutathione constitutes a PARK7 substrate. as a cofactor. Post-translationally, sumoylated on Lys-130 by pias2 or pias4; which is essential for cell-growth promoting activity and transforming activity. Undergoes cleavage of a C-terminal peptide and subsequent activation of protease activity in response to oxidative stress. In terms of tissue distribution, larval brain and gut from 96 hours post-fertilization (hpf). Ubiquitous in adult; most abundant in brain, eye, heart and muscle. Within brain, neuronal expression is widespread, particularly in the cerebellum, medullary reticular formation and diencephalon. Expressed in major forebrain and diencephalic dopaminergic cell groups.

It localises to the cell membrane. Its subcellular location is the cytoplasm. The protein localises to the nucleus. It is found in the membrane raft. The protein resides in the mitochondrion. It localises to the endoplasmic reticulum. It catalyses the reaction N(omega)-(1-hydroxy-2-oxopropyl)-L-arginyl-[protein] + H2O = lactate + L-arginyl-[protein] + H(+). The catalysed reaction is N(6)-(1-hydroxy-2-oxopropyl)-L-lysyl-[protein] + H2O = lactate + L-lysyl-[protein] + H(+). It carries out the reaction S-(1-hydroxy-2-oxopropyl)-L-cysteinyl-[protein] + H2O = lactate + L-cysteinyl-[protein] + H(+). The enzyme catalyses N(omega)-(1-hydroxy-2-oxoethyl)-L-arginyl-[protein] + H2O = L-arginyl-[protein] + glycolate + H(+). It catalyses the reaction N(6)-(1-hydroxy-2-oxoethyl)-L-lysyl-[protein] + H2O = glycolate + L-lysyl-[protein] + H(+). The catalysed reaction is S-(1-hydroxy-2-oxoethyl)-L-cysteinyl-[protein] + H2O = glycolate + L-cysteinyl-[protein] + H(+). It carries out the reaction N(2)-(1-hydroxy-2-oxopropyl)-dGTP + H2O = lactate + dGTP + H(+). The enzyme catalyses N(2)-(1-hydroxy-2-oxopropyl)-GTP + H2O = lactate + GTP + H(+). It catalyses the reaction N(2)-(1-hydroxy-2-oxopropyl)-GDP + H2O = lactate + GDP + H(+). The catalysed reaction is N(2)-(1-hydroxy-2-oxopropyl)-GMP + H2O = lactate + GMP + H(+). It carries out the reaction N(2)-(1-hydroxy-2-oxoethyl)-dGTP + H2O = dGTP + glycolate + H(+). The enzyme catalyses N(2)-(1-hydroxy-2-oxoethyl)-GTP + H2O = glycolate + GTP + H(+). It catalyses the reaction N(2)-(1-hydroxy-2-oxoethyl)-GDP + H2O = glycolate + GDP + H(+). The catalysed reaction is N(2)-(1-hydroxy-2-oxoethyl)-GMP + H2O = glycolate + GMP + H(+). It carries out the reaction an N(2)-(1-hydroxy-2-oxopropyl)-guanosine in RNA + H2O = a guanosine in RNA + lactate + H(+). The enzyme catalyses an N(2)-(1-hydroxy-2-oxopropyl)-2'-deoxyguanosine in DNA + H2O = a 2'-deoxyguanosine in DNA + lactate + H(+). It catalyses the reaction an N(2)-(1-hydroxy-2-oxoethyl)-guanosine in RNA + H2O = a guanosine in RNA + glycolate + H(+). The catalysed reaction is an N(2)-(1-hydroxy-2-oxoethyl)-2'-deoxyguanosine in DNA + H2O = a 2'-deoxyguanosine in DNA + glycolate + H(+). In terms of biological role, multifunctional protein with controversial molecular function which plays an important role in cell protection against oxidative stress and cell death acting as oxidative stress sensor and redox-sensitive chaperone and protease. It is involved in neuroprotective mechanisms like the stabilization of NFE2L2 and PINK1 proteins, male fertility as a positive regulator of androgen signaling pathway as well as cell growth and transformation through, for instance, the modulation of NF-kappa-B signaling pathway. Has been described as a protein and nucleotide deglycase that catalyzes the deglycation of the Maillard adducts formed between amino groups of proteins or nucleotides and reactive carbonyl groups of glyoxals. But this function is rebuted by other works. As a protein deglycase, repairs methylglyoxal- and glyoxal-glycated proteins, and releases repaired proteins and lactate or glycolate, respectively. Deglycates cysteine, arginine and lysine residues in proteins, and thus reactivates these proteins by reversing glycation by glyoxals. Acts on early glycation intermediates (hemithioacetals and aminocarbinols), preventing the formation of advanced glycation endproducts (AGE) that cause irreversible damage. Also functions as a nucleotide deglycase able to repair glycated guanine in the free nucleotide pool (GTP, GDP, GMP, dGTP) and in DNA and RNA. Is thus involved in a major nucleotide repair system named guanine glycation repair (GG repair), dedicated to reversing methylglyoxal and glyoxal damage via nucleotide sanitization and direct nucleic acid repair. Protects histones from adduction by methylglyoxal, controls the levels of methylglyoxal-derived argininine modifications on chromatin. Displays a very low glyoxalase activity that may reflect its deglycase activity. It is involved in neuroprotective mechanisms as well as cell growth and transformation. Its involvement in protein repair could also explain other unrelated functions. Eliminates hydrogen peroxide and protects cells against hydrogen peroxide-induced cell death. Required for correct mitochondrial morphology and function as well as for autophagy of dysfunctional mitochondria. Regulates astrocyte inflammatory responses, may modulate lipid rafts-dependent endocytosis in astrocytes and neuronal cells. Binds to a number of mRNAs containing multiple copies of GG or CC motifs and partially inhibits their translation but dissociates following oxidative stress. Metal-binding protein able to bind copper as well as toxic mercury ions, enhances the cell protection mechanism against induced metal toxicity. The chain is Parkinson disease protein 7 homolog from Danio rerio (Zebrafish).